Consider the following 186-residue polypeptide: Adenine phosphoribosyltransferase (186 aa).

It belongs to the purine/pyrimidine phosphoribosyltransferase family. In terms of assembly, homodimer.

It is found in the cytoplasm. It catalyses the reaction AMP + diphosphate = 5-phospho-alpha-D-ribose 1-diphosphate + adenine. The protein operates within purine metabolism; AMP biosynthesis via salvage pathway; AMP from adenine: step 1/1. In terms of biological role, catalyzes a salvage reaction resulting in the formation of AMP, that is energically less costly than de novo synthesis. This is Adenine phosphoribosyltransferase from Xanthomonas campestris pv. campestris (strain B100).